The primary structure comprises 396 residues: Elongation factor Tu (396 aa).

The tr-type G domain occupies 10–206 (KPHVNVGTIG…ALDSYIPTPE (197 aa)). The tract at residues 19 to 26 (GHVDHGKT) is G1. Residue 19–26 (GHVDHGKT) participates in GTP binding. Position 26 (T26) interacts with Mg(2+). Residues 60 to 64 (GITIN) form a G2 region. Residues 81–84 (DCPG) form a G3 region. Residues 81–85 (DCPGH) and 136–139 (NKCD) contribute to the GTP site. The G4 stretch occupies residues 136–139 (NKCD). The segment at 174 to 176 (SAL) is G5.

This sequence belongs to the TRAFAC class translation factor GTPase superfamily. Classic translation factor GTPase family. EF-Tu/EF-1A subfamily. Monomer.

The protein resides in the cytoplasm. It carries out the reaction GTP + H2O = GDP + phosphate + H(+). GTP hydrolase that promotes the GTP-dependent binding of aminoacyl-tRNA to the A-site of ribosomes during protein biosynthesis. The chain is Elongation factor Tu from Azoarcus sp. (strain BH72).